Here is a 76-residue protein sequence, read N- to C-terminus: Vasotab-TY3 (76 aa).

The first 21 residues, 1-21 (MKFALFSVLVLMLIATFVAAD), serve as a signal peptide directing secretion. Residues 22-76 (DCPRICTSDYTPVCGTPSGGRRSANRTFANQCGLDSHNCLNKGDTYDKLHDGECK) enclose the Kazal-like domain. Intrachain disulfides connect Cys23-Cys60, Cys27-Cys53, and Cys35-Cys75.

As to expression, expressed by the salivary gland.

The protein localises to the secreted. Vasodilator protein that inhibits vasoconstriction of isolated rat femoral artery induced by phenylephrine. Since platelet aggregation and vasoconstriction are key hemostatic responses, particularly in small wounds, this protein likely participates in the antihemostatic responses during blood feeding. Blocks L-type calcium channels (Cav1/CACNA1) in left ventricular myocytes isolated from rat hearts. In Tabanus yao (Horsefly), this protein is Vasotab-TY3.